Consider the following 70-residue polypeptide: DNA-directed RNA polymerase subunit omega (70 aa).

It belongs to the RNA polymerase subunit omega family. In terms of assembly, the RNAP catalytic core consists of 2 alpha, 1 beta, 1 beta' and 1 omega subunit. When a sigma factor is associated with the core the holoenzyme is formed, which can initiate transcription.

It catalyses the reaction RNA(n) + a ribonucleoside 5'-triphosphate = RNA(n+1) + diphosphate. Functionally, promotes RNA polymerase assembly. Latches the N- and C-terminal regions of the beta' subunit thereby facilitating its interaction with the beta and alpha subunits. The protein is DNA-directed RNA polymerase subunit omega of Marinobacter nauticus (strain ATCC 700491 / DSM 11845 / VT8) (Marinobacter aquaeolei).